An 815-amino-acid chain; its full sequence is BTB/POZ domain-containing protein KCTD3 (815 aa).

The 70-residue stretch at 18 to 87 folds into the BTB domain; it reads EIVQLNVGGT…LRTKELDLRG (70 aa). Polar residues predominate over residues 139–168; the sequence is INNTVRSADSRNGLNSTEGEARGNGTQPVL. The disordered stretch occupies residues 139–170; sequence INNTVRSADSRNGLNSTEGEARGNGTQPVLSG. WD repeat units lie at residues 174-218, 224-263, 270-305, 310-342, 354-404, 412-449, 457-504, and 510-569; these read ETVR…GWQQ, YLDW…LWSV, SEIG…VWNA, WQVQ…YIDM, LLVT…VQHP, QLFQ…TWTV, STQP…IQKV, and KLFV…MWDL. The interval 512-815 is interaction with HCN3; it reads FVRLSSTGKR…SDSSGQEYSL (304 aa). A phosphoserine mark is found at serine 604, serine 664, and serine 711. Residues 736–758 show a composition bias toward basic and acidic residues; the sequence is SESKKRSSEDENENKIEFRKKGG. Residues 736–815 are disordered; it reads SESKKRSSED…SDSSGQEYSL (80 aa). A compositionally biased stretch (low complexity) spans 774-800; that stretch reads ASSPSTSDGGTDSPGTASPSPTKTTPS. Serine 793 bears the Phosphoserine mark.

It belongs to the KCTD3 family. In terms of assembly, interacts with HCN3. As to expression, broadly expressed in normal tissues.

Its subcellular location is the cell membrane. Functionally, accessory subunit of potassium/sodium hyperpolarization-activated cyclic nucleotide-gated channel 3 (HCN3) up-regulating its cell-surface expression and current density without affecting its voltage dependence and kinetics. This Homo sapiens (Human) protein is BTB/POZ domain-containing protein KCTD3 (KCTD3).